A 396-amino-acid chain; its full sequence is S-adenosylmethionine synthase (396 aa).

His-16 contributes to the ATP binding site. Asp-18 is a Mg(2+) binding site. Glu-44 contacts K(+). L-methionine is bound by residues Glu-57 and Gln-100. Positions 100-110 (QSVDIAQGVDR) are flexible loop. ATP is bound by residues 165–167 (DAK), 231–232 (KF), Asp-240, 246–247 (RK), Ala-263, and Lys-267. Asp-240 provides a ligand contact to L-methionine. Lys-271 contributes to the L-methionine binding site.

It belongs to the AdoMet synthase family. Homotetramer; dimer of dimers. Mg(2+) serves as cofactor. It depends on K(+) as a cofactor.

It is found in the cytoplasm. It carries out the reaction L-methionine + ATP + H2O = S-adenosyl-L-methionine + phosphate + diphosphate. It functions in the pathway amino-acid biosynthesis; S-adenosyl-L-methionine biosynthesis; S-adenosyl-L-methionine from L-methionine: step 1/1. Its function is as follows. Catalyzes the formation of S-adenosylmethionine (AdoMet) from methionine and ATP. The overall synthetic reaction is composed of two sequential steps, AdoMet formation and the subsequent tripolyphosphate hydrolysis which occurs prior to release of AdoMet from the enzyme. The chain is S-adenosylmethionine synthase from Marinobacter nauticus (strain ATCC 700491 / DSM 11845 / VT8) (Marinobacter aquaeolei).